Consider the following 184-residue polypeptide: ATP synthase subunit b, chloroplastic (184 aa).

Residues leucine 27 to leucine 49 traverse the membrane as a helical segment.

Belongs to the ATPase B chain family. As to quaternary structure, F-type ATPases have 2 components, F(1) - the catalytic core - and F(0) - the membrane proton channel. F(1) has five subunits: alpha(3), beta(3), gamma(1), delta(1), epsilon(1). F(0) has four main subunits: a(1), b(1), b'(1) and c(10-14). The alpha and beta chains form an alternating ring which encloses part of the gamma chain. F(1) is attached to F(0) by a central stalk formed by the gamma and epsilon chains, while a peripheral stalk is formed by the delta, b and b' chains.

It localises to the plastid. The protein resides in the chloroplast thylakoid membrane. F(1)F(0) ATP synthase produces ATP from ADP in the presence of a proton or sodium gradient. F-type ATPases consist of two structural domains, F(1) containing the extramembraneous catalytic core and F(0) containing the membrane proton channel, linked together by a central stalk and a peripheral stalk. During catalysis, ATP synthesis in the catalytic domain of F(1) is coupled via a rotary mechanism of the central stalk subunits to proton translocation. Its function is as follows. Component of the F(0) channel, it forms part of the peripheral stalk, linking F(1) to F(0). The sequence is that of ATP synthase subunit b, chloroplastic from Lepidium virginicum (Virginia pepperweed).